Consider the following 312-residue polypeptide: Ribonuclease Z (312 aa).

H62, H64, D66, H67, H139, D210, and H268 together coordinate Zn(2+). D66 acts as the Proton acceptor in catalysis.

Belongs to the RNase Z family. Homodimer. The cofactor is Zn(2+).

It catalyses the reaction Endonucleolytic cleavage of RNA, removing extra 3' nucleotides from tRNA precursor, generating 3' termini of tRNAs. A 3'-hydroxy group is left at the tRNA terminus and a 5'-phosphoryl group is left at the trailer molecule.. In terms of biological role, zinc phosphodiesterase, which displays some tRNA 3'-processing endonuclease activity. Probably involved in tRNA maturation, by removing a 3'-trailer from precursor tRNA. The polypeptide is Ribonuclease Z (Crocosphaera subtropica (strain ATCC 51142 / BH68) (Cyanothece sp. (strain ATCC 51142))).